Reading from the N-terminus, the 60-residue chain is Large ribosomal subunit protein bL33 (60 aa).

Belongs to the bacterial ribosomal protein bL33 family.

The protein is Large ribosomal subunit protein bL33 of Chlorobium chlorochromatii (strain CaD3).